The following is a 293-amino-acid chain: Germ cell-specific gene 1-like protein 2 (293 aa).

Over 1 to 8 the chain is Cytoplasmic; it reads MDRAKQQQ. A helical transmembrane segment spans residues 9–29; that stretch reads ALLLLPVCLALTFSLTAVVSS. The Extracellular portion of the chain corresponds to 30 to 120; the sequence is HWCEGTRRVV…RSVVPAEEQG (91 aa). N-linked (GlcNAc...) asparagine glycans are attached at residues N59 and N67. Residues 121–141 traverse the membrane as a helical segment; sequence VLWLSIGGEVLDIVLILTSAI. The Cytoplasmic portion of the chain corresponds to 142-160; the sequence is LLGSRVSCRSPGFHWLRVD. The helical transmembrane segment at 161–181 threads the bilayer; that stretch reads ALVAIFMVLAGLLGMVAHMMY. Residues 182 to 204 lie on the Extracellular side of the membrane; the sequence is TTIFQITVNLGPEDWKPQTWDYG. Residues 205–225 form a helical membrane-spanning segment; the sequence is WSYCLAWGSFALCLAVSVSAM. The Cytoplasmic segment spans residues 226 to 293; sequence SRFTAARLEF…PGAPGKVSIC (68 aa).

It belongs to the GSG1 family.

The protein localises to the membrane. This chain is Germ cell-specific gene 1-like protein 2, found in Homo sapiens (Human).